We begin with the raw amino-acid sequence, 104 residues long: UPF0235 protein M446_3939 (104 aa).

Belongs to the UPF0235 family.

The polypeptide is UPF0235 protein M446_3939 (Methylobacterium sp. (strain 4-46)).